The following is a 918-amino-acid chain: Rap guanine nucleotide exchange factor 3 (918 aa).

Phosphoserine is present on S79. One can recognise a DEP domain in the interval 110–186 (ATYPTLIRDR…RDAQFYRFPG (77 aa)). An interaction with PDE3B region spans residues 218–242 (TVALRKPPGQRTDEELDLIFEELLH). 3',5'-cyclic AMP contacts are provided by residues 311 to 314 (GQLA) and 321 to 322 (RA). The tract at residues 369-388 (TSQGAGPSRPPTPGRNRYTV) is disordered. The N-terminal Ras-GEF domain maps to 384–521 (NRYTVMSGTP…EQYPERRRHH (138 aa)). The tract at residues 398–422 (ELLLEAMRPDSSAHDPTETFLSDFL) is interaction with PDE3B. 2 positions are modified to phosphoserine: S531 and S859. The Ras-GEF domain occupies 665–884 (SAKDLAGQLT…SRISTCSEQS (220 aa)).

In terms of assembly, interacts with PDE3B and PIK3R6; form a signaling complex that regulates phosphatidylinositol 3-kinase gamma in angiogenesis.

It localises to the cytoplasm. The protein resides in the membrane. Guanine nucleotide exchange factor (GEF) for RAP1A and RAP2A small GTPases that is activated by binding cAMP. Through simultaneous binding of PDE3B to RAPGEF3 and PIK3R6 is assembled in a signaling complex in which it activates the PI3K gamma complex and which is involved in angiogenesis. Plays a role in the modulation of the cAMP-induced dynamic control of endothelial barrier function through a pathway that is independent on Rho-mediated signaling. Required for the actin rearrangement at cell-cell junctions, such as stress fibers and junctional actin. The polypeptide is Rap guanine nucleotide exchange factor 3 (Rapgef3) (Mus musculus (Mouse)).